The sequence spans 519 residues: Cilia- and flagella-associated protein 157 (519 aa).

The span at 1-11 shows a compositional bias: basic residues; sequence MPPKKKGKRGP. The disordered stretch occupies residues 1-25; sequence MPPKKKGKRGPSAKTKEKETVRVAS. Coiled coils occupy residues 28–185 and 241–356; these read VTEQ…EKKV and IELI…QRTL.

It belongs to the CFAP157 family.

It is found in the cytoplasm. The protein localises to the cytoskeleton. The protein resides in the cilium basal body. In terms of biological role, specifically required during spermatogenesis for flagellum morphogenesis and sperm motility. The polypeptide is Cilia- and flagella-associated protein 157 (Xenopus tropicalis (Western clawed frog)).